Here is a 162-residue protein sequence, read N- to C-terminus: NADH-quinone oxidoreductase subunit I (162 aa).

4Fe-4S ferredoxin-type domains lie at 54–83 (RRYE…IESE) and 93–122 (TRYD…ETQI). C63, C66, C69, C73, C102, C105, C108, and C112 together coordinate [4Fe-4S] cluster.

This sequence belongs to the complex I 23 kDa subunit family. As to quaternary structure, NDH-1 is composed of 14 different subunits. Subunits NuoA, H, J, K, L, M, N constitute the membrane sector of the complex. [4Fe-4S] cluster is required as a cofactor.

The protein resides in the cell inner membrane. The catalysed reaction is a quinone + NADH + 5 H(+)(in) = a quinol + NAD(+) + 4 H(+)(out). Functionally, NDH-1 shuttles electrons from NADH, via FMN and iron-sulfur (Fe-S) centers, to quinones in the respiratory chain. The immediate electron acceptor for the enzyme in this species is believed to be ubiquinone. Couples the redox reaction to proton translocation (for every two electrons transferred, four hydrogen ions are translocated across the cytoplasmic membrane), and thus conserves the redox energy in a proton gradient. The chain is NADH-quinone oxidoreductase subunit I from Burkholderia mallei (strain NCTC 10247).